A 769-amino-acid chain; its full sequence is Endonuclease MutS2 (769 aa).

335–342 (GGNAGGKT) serves as a coordination point for ATP. The Smr domain occupies 694 to 769 (IDLRGKRADV…GDGMTEVELV (76 aa)).

The protein belongs to the DNA mismatch repair MutS family. MutS2 subfamily. In terms of assembly, homodimer. Binds to stalled ribosomes, contacting rRNA.

Functionally, endonuclease that is involved in the suppression of homologous recombination and thus may have a key role in the control of bacterial genetic diversity. Acts as a ribosome collision sensor, splitting the ribosome into its 2 subunits. Detects stalled/collided 70S ribosomes which it binds and splits by an ATP-hydrolysis driven conformational change. Acts upstream of the ribosome quality control system (RQC), a ribosome-associated complex that mediates the extraction of incompletely synthesized nascent chains from stalled ribosomes and their subsequent degradation. Probably generates substrates for RQC. This Maridesulfovibrio salexigens (strain ATCC 14822 / DSM 2638 / NCIMB 8403 / VKM B-1763) (Desulfovibrio salexigens) protein is Endonuclease MutS2.